Here is a 364-residue protein sequence, read N- to C-terminus: Phosphoserine aminotransferase (364 aa).

Arg-46 provides a ligand contact to L-glutamate. Pyridoxal 5'-phosphate-binding positions include 80 to 81, Trp-106, Thr-157, Asp-176, and Gln-199; that span reads AR. An N6-(pyridoxal phosphate)lysine modification is found at Lys-200. Residue 241-242 coordinates pyridoxal 5'-phosphate; it reads NT.

It belongs to the class-V pyridoxal-phosphate-dependent aminotransferase family. SerC subfamily. In terms of assembly, homodimer. Requires pyridoxal 5'-phosphate as cofactor.

It localises to the cytoplasm. It carries out the reaction O-phospho-L-serine + 2-oxoglutarate = 3-phosphooxypyruvate + L-glutamate. It catalyses the reaction 4-(phosphooxy)-L-threonine + 2-oxoglutarate = (R)-3-hydroxy-2-oxo-4-phosphooxybutanoate + L-glutamate. The protein operates within amino-acid biosynthesis; L-serine biosynthesis; L-serine from 3-phospho-D-glycerate: step 2/3. Its pathway is cofactor biosynthesis; pyridoxine 5'-phosphate biosynthesis; pyridoxine 5'-phosphate from D-erythrose 4-phosphate: step 3/5. Functionally, catalyzes the reversible conversion of 3-phosphohydroxypyruvate to phosphoserine and of 3-hydroxy-2-oxo-4-phosphonooxybutanoate to phosphohydroxythreonine. In Vibrio vulnificus (strain CMCP6), this protein is Phosphoserine aminotransferase.